The primary structure comprises 123 residues: UPF0102 protein Dole_2298 (123 aa).

It belongs to the UPF0102 family.

The polypeptide is UPF0102 protein Dole_2298 (Desulfosudis oleivorans (strain DSM 6200 / JCM 39069 / Hxd3) (Desulfococcus oleovorans)).